A 369-amino-acid polypeptide reads, in one-letter code: Anhydro-N-acetylmuramic acid kinase (369 aa).

ATP is bound at residue 11 to 18 (GTSMDAVD).

It belongs to the anhydro-N-acetylmuramic acid kinase family.

The enzyme catalyses 1,6-anhydro-N-acetyl-beta-muramate + ATP + H2O = N-acetyl-D-muramate 6-phosphate + ADP + H(+). It participates in amino-sugar metabolism; 1,6-anhydro-N-acetylmuramate degradation. The protein operates within cell wall biogenesis; peptidoglycan recycling. Its function is as follows. Catalyzes the specific phosphorylation of 1,6-anhydro-N-acetylmuramic acid (anhMurNAc) with the simultaneous cleavage of the 1,6-anhydro ring, generating MurNAc-6-P. Is required for the utilization of anhMurNAc either imported from the medium or derived from its own cell wall murein, and thus plays a role in cell wall recycling. This is Anhydro-N-acetylmuramic acid kinase from Idiomarina loihiensis (strain ATCC BAA-735 / DSM 15497 / L2-TR).